Reading from the N-terminus, the 213-residue chain is Thymidylate kinase (213 aa).

Position 10 to 17 (10 to 17 (GLEGAGKT)) interacts with ATP.

This sequence belongs to the thymidylate kinase family.

The catalysed reaction is dTMP + ATP = dTDP + ADP. In terms of biological role, phosphorylation of dTMP to form dTDP in both de novo and salvage pathways of dTTP synthesis. This is Thymidylate kinase from Klebsiella pneumoniae subsp. pneumoniae (strain ATCC 700721 / MGH 78578).